A 284-amino-acid chain; its full sequence is Probable endonuclease 4 (284 aa).

Positions 69, 109, 145, 179, 182, 216, 229, 231, and 261 each coordinate Zn(2+).

The protein belongs to the AP endonuclease 2 family. Zn(2+) is required as a cofactor.

The catalysed reaction is Endonucleolytic cleavage to 5'-phosphooligonucleotide end-products.. In terms of biological role, endonuclease IV plays a role in DNA repair. It cleaves phosphodiester bonds at apurinic or apyrimidinic (AP) sites, generating a 3'-hydroxyl group and a 5'-terminal sugar phosphate. This chain is Probable endonuclease 4, found in Klebsiella pneumoniae subsp. pneumoniae (strain ATCC 700721 / MGH 78578).